Reading from the N-terminus, the 385-residue chain is Glucans biosynthesis protein C (385 aa).

10 consecutive transmembrane segments (helical) span residues 17–37, 60–80, 91–111, 137–157, 173–193, 212–232, 239–259, 274–294, 311–331, and 338–358; these read AWLMLLGIPFHISLIYSSHTW, MQVFFVISGYFSYMLFLRYPL, VGIPMLTAIPLLTLPQFIMLQ, ISHLWFLLVLVVMTTLCVWIF, KFSMVKLSVIFLCLGIGYAVI, FIVMQTLFYLPFFILGALAFI, LFTTPSRGCTLAAALAFVAYL, TESVITMVLGLWMVNVVFSFG, ASLFIYLVHHPLTLFFGAYIT, and WLGFLCGLIFVVGIAIILYEI.

It belongs to the acyltransferase 3 family. OpgC subfamily.

It is found in the cell membrane. The protein operates within glycan metabolism; osmoregulated periplasmic glucan (OPG) biosynthesis. Functionally, necessary for the succinyl substitution of periplasmic glucans. Could catalyze the transfer of succinyl residues from the cytoplasmic side of the membrane to the nascent glucan backbones on the periplasmic side of the membrane. The chain is Glucans biosynthesis protein C from Escherichia coli O6:K15:H31 (strain 536 / UPEC).